The chain runs to 138 residues: Large ribosomal subunit protein uL16 (138 aa).

The span at 1 to 13 (MLQPSRRKFRKEQ) shows a compositional bias: basic residues. Residues 1–20 (MLQPSRRKFRKEQKGRNTGV) form a disordered region.

It belongs to the universal ribosomal protein uL16 family. In terms of assembly, part of the 50S ribosomal subunit.

Its function is as follows. Binds 23S rRNA and is also seen to make contacts with the A and possibly P site tRNAs. The sequence is that of Large ribosomal subunit protein uL16 from Leptothrix cholodnii (strain ATCC 51168 / LMG 8142 / SP-6) (Leptothrix discophora (strain SP-6)).